A 521-amino-acid chain; its full sequence is UDP-N-acetylmuramoyl-L-alanyl-D-glutamate--2,6-diaminopimelate ligase (521 aa).

Ser33 contacts UDP-N-acetyl-alpha-D-muramoyl-L-alanyl-D-glutamate. 116 to 122 is an ATP binding site; that stretch reads GTNGKTT. UDP-N-acetyl-alpha-D-muramoyl-L-alanyl-D-glutamate contacts are provided by residues 158 to 159, Ser185, Gln191, and Arg193; that span reads TT. The residue at position 225 (Lys225) is an N6-carboxylysine. Meso-2,6-diaminopimelate-binding positions include Arg409, 433-436, Gly483, and Glu487; that span reads DNPR. The Meso-diaminopimelate recognition motif signature appears at 433-436; sequence DNPR.

It belongs to the MurCDEF family. MurE subfamily. Requires Mg(2+) as cofactor. Carboxylation is probably crucial for Mg(2+) binding and, consequently, for the gamma-phosphate positioning of ATP.

It is found in the cytoplasm. It catalyses the reaction UDP-N-acetyl-alpha-D-muramoyl-L-alanyl-D-glutamate + meso-2,6-diaminopimelate + ATP = UDP-N-acetyl-alpha-D-muramoyl-L-alanyl-gamma-D-glutamyl-meso-2,6-diaminopimelate + ADP + phosphate + H(+). It functions in the pathway cell wall biogenesis; peptidoglycan biosynthesis. In terms of biological role, catalyzes the addition of meso-diaminopimelic acid to the nucleotide precursor UDP-N-acetylmuramoyl-L-alanyl-D-glutamate (UMAG) in the biosynthesis of bacterial cell-wall peptidoglycan. The chain is UDP-N-acetylmuramoyl-L-alanyl-D-glutamate--2,6-diaminopimelate ligase from Nitrosomonas europaea (strain ATCC 19718 / CIP 103999 / KCTC 2705 / NBRC 14298).